The sequence spans 920 residues: GTPase activating protein homolog 1 (920 aa).

Residues 65 to 87 (NLGGLSNDSTNNNSNSNNTIDSS) are compositionally biased toward low complexity. Residues 65–91 (NLGGLSNDSTNNNSNSNNTIDSSKPLS) form a disordered region. An F-BAR domain is found at 90 to 344 (LSFENDMSDG…FVDIIDPEVD (255 aa)). The stretch at 184-276 (LNEAIKDMEK…EDEYKEQINE (93 aa)) forms a coiled coil. The segment covering 403 to 449 (TNTITSQSGSTIISNGASQPIEIPSPQPISEQQQIPPQQQQQQQQAQ) has biased composition (low complexity). 2 disordered regions span residues 403-468 (TNTI…PMGR) and 490-518 (STSS…LSKS). Residues 450–468 (VPPTSINQSSSPPVNPMGR) are compositionally biased toward polar residues. Residues 490-513 (STSSLLTKDGNSTTSSNTSTSNSN) show a composition bias toward low complexity. The 184-residue stretch at 533-716 (VELEVLIEND…NMIIDSLETK (184 aa)) folds into the Rho-GAP domain. The interval 727 to 836 (PIIPDDENSD…VSSNGNNINS (110 aa)) is disordered. Residues 730–741 (PDDENSDDDDDD) show a composition bias toward acidic residues. Residues 757 to 836 (NDINTTNINN…VSSNGNNINS (80 aa)) show a composition bias toward low complexity.

It is found in the cytoplasm. It localises to the contractile vacuole. Its function is as follows. Rho GTPase-activating protein involved in the signal transduction pathway. Regulator of the contractile vacuole network as well as involved in driving vacuole emptying. This is GTPase activating protein homolog 1 (mgp1) from Dictyostelium discoideum (Social amoeba).